The primary structure comprises 3085 residues: Genome polyprotein (3085 aa).

The Peptidase S30 domain occupies 170–313 (LVAKSDFDDL…AGDVGRTMHY (144 aa)). Active-site for P1 proteinase activity residues include His-224, Glu-233, and Ser-266. Positions 365 to 368 (KMAC) match the Involved in interaction with stylet and aphid transmission motif. The Involved in virions binding and aphid transmission signature appears at 622–624 (PTK). Residues 648-770 (MYIAKEGYCY…EGEMKWYRVG (123 aa)) form the Peptidase C6 domain. Residues Cys-656 and His-729 each act as for helper component proteinase activity in the active site. The Helicase ATP-binding domain occupies 1241-1393 (TICASSEQEF…TQHDVLIKIE (153 aa)). An ATP-binding site is contributed by 1254 to 1261 (GAVGSGKS). Positions 1343–1346 (DESH) match the DESH box motif. The Helicase C-terminal domain maps to 1412–1571 (DVVQNGDNIL…NLPVMTHNVT (160 aa)). The Nuclear localization signal motif lies at 1895–1904 (ERGKRKGNNS). Tyr-1919 carries the post-translational modification O-(5'-phospho-RNA)-tyrosine. Residues 2047-2266 (GKSIVKGLRN…VAWNGMTLRE (220 aa)) form the Peptidase C4 domain. Catalysis depends on for nuclear inclusion protein A activity residues His-2092, Asp-2127, and Cys-2198. The RdRp catalytic domain maps to 2535 to 2659 (WIYCDADGSQ…AIYPSKEKFL (125 aa)). Positions 2801-2869 (DGPDIVTYQG…STAVPRLKQI (69 aa)) are disordered. Residues 2816-2831 (KSSQPQSSSPQVPQQV) show a composition bias toward low complexity. Residues 2839-2855 (GRDKQSVIKHDSTKSKD) are compositionally biased toward basic and acidic residues. Thr-3068 bears the Phosphothreonine mark.

Belongs to the potyviridae genome polyprotein family. Interacts with host eIF4E protein (via cap-binding region); this interaction mediates the translation of the VPg-viral RNA conjugates. Part of a complex that comprises VPg, RNA, host EIF4E and EIF4G; this interaction mediates the translation of the VPg-viral RNA conjugates. In terms of processing, VPg is uridylylated by the polymerase and is covalently attached to the 5'-end of the genomic RNA. This uridylylated form acts as a nucleotide-peptide primer for the polymerase. Post-translationally, potyviral RNA is expressed as two polyproteins which undergo post-translational proteolytic processing. Genome polyprotein is processed by NIa-pro, P1 and HC-pro proteinases resulting in the production of at least ten individual proteins. P3N-PIPO polyprotein is cleaved by P1 and HC-pro proteinases resulting in the production of three individual proteins. The P1 proteinase and the HC-pro cleave only their respective C-termini autocatalytically. 6K1 is essential for proper proteolytic separation of P3 from CI.

The protein resides in the host cytoplasmic vesicle. It is found in the host nucleus. It localises to the virion. It catalyses the reaction RNA(n) + a ribonucleoside 5'-triphosphate = RNA(n+1) + diphosphate. The catalysed reaction is Hydrolyzes glutaminyl bonds, and activity is further restricted by preferences for the amino acids in P6 - P1' that vary with the species of potyvirus, e.g. Glu-Xaa-Xaa-Tyr-Xaa-Gln-|-(Ser or Gly) for the enzyme from tobacco etch virus. The natural substrate is the viral polyprotein, but other proteins and oligopeptides containing the appropriate consensus sequence are also cleaved.. The enzyme catalyses Hydrolyzes a Gly-|-Gly bond at its own C-terminus, commonly in the sequence -Tyr-Xaa-Val-Gly-|-Gly, in the processing of the potyviral polyprotein.. Required for aphid transmission and also has proteolytic activity. Only cleaves a Gly-Gly dipeptide at its own C-terminus. Interacts with virions and aphid stylets. Acts as a suppressor of RNA-mediated gene silencing, also known as post-transcriptional gene silencing (PTGS), a mechanism of plant viral defense that limits the accumulation of viral RNAs. May have RNA-binding activity. Functionally, has helicase activity. It may be involved in replication. Its function is as follows. Indispensable for virus replication. Reduces the abundance of host transcripts related to jasmonic acid biosynthesis therefore altering the host defenses. In order to increase its own stability, decreases host protein degradation pathways. In terms of biological role, indispensable for virus replication. Mediates the cap-independent, EIF4E-dependent translation of viral genomic RNAs. Binds to the cap-binding site of host EIF4E and thus interferes with the host EIF4E-dependent mRNA export and translation. VPg-RNA directly binds EIF4E and is a template for transcription. Also forms trimeric complexes with EIF4E-EIF4G, which are templates for translation. Functionally, has RNA-binding and proteolytic activities. Its function is as follows. An RNA-dependent RNA polymerase that plays an essential role in the virus replication. In terms of biological role, involved in aphid transmission, cell-to-cell and systemis movement, encapsidation of the viral RNA and in the regulation of viral RNA amplification. The sequence is that of Genome polyprotein from Beet mosaic virus (BtMV).